Consider the following 446-residue polypeptide: Citrate/sodium symporter (446 aa).

A run of 5 helical transmembrane segments spans residues 23 to 43 (IFGM…LSHF), 46 to 66 (AIPT…AIFG), 79 to 99 (IGGA…AGIF), 110 to 130 (VMDK…GAIL), and 148 to 168 (ILAG…CFGI). Na(+) contacts are provided by Ile181 and Gly183. Citrate-binding residues include Asn186 and Gly187. 5 consecutive transmembrane segments (helical) span residues 213-233 (IAIL…LDMI), 267-287 (ETAV…VVAK), 289-309 (ILPS…LIVA), 335-355 (QLLW…QEII), and 364-384 (VIAA…GWLI). Met399 and Asn401 together coordinate Na(+). Citrate contacts are provided by Arg402, Gly404, Ser405, and Arg428. Residues 425-445 (ISSRLGGGIVLVIASIVFSMM) form a helical membrane-spanning segment.

This sequence belongs to the 2-hydroxycarboxylate transporter (2-HCT) (TC 2.A.24) family. In terms of assembly, homodimer.

Its subcellular location is the cell inner membrane. The catalysed reaction is citrate(out) + 2 Na(+)(out) = citrate(in) + 2 Na(+)(in). Its function is as follows. Secondary active transporter that catalyzes the uptake of citrate across the membrane with the concomitant uptake of sodium. Is specific for citrate. The chain is Citrate/sodium symporter from Salmonella pullorum.